The primary structure comprises 162 residues: Cytochrome c-type biogenesis protein CcmE (162 aa).

The Cytoplasmic segment spans residues 1 to 8 (MNPVRKKR). Residues 9 to 29 (LIIVLAILVGVGAAVGLALSA) form a helical; Signal-anchor for type II membrane protein membrane-spanning segment. The Periplasmic portion of the chain corresponds to 30 to 162 (LQQNINLFYT…GETSYNQEGK (133 aa)). Heme is bound by residues histidine 124 and tyrosine 128. Over residues 139-148 (DSGQLKHYEN) the composition is skewed to basic and acidic residues. Positions 139 to 162 (DSGQLKHYENGKAAGETSYNQEGK) are disordered.

It belongs to the CcmE/CycJ family.

The protein localises to the cell inner membrane. Its function is as follows. Heme chaperone required for the biogenesis of c-type cytochromes. Transiently binds heme delivered by CcmC and transfers the heme to apo-cytochromes in a process facilitated by CcmF and CcmH. This is Cytochrome c-type biogenesis protein CcmE from Pseudomonas paraeruginosa (strain DSM 24068 / PA7) (Pseudomonas aeruginosa (strain PA7)).